A 390-amino-acid polypeptide reads, in one-letter code: Protein TAB2 homolog, chloroplastic (390 aa).

The N-terminal 69 residues, 1-69 (MTTATAIVAG…RSISSESSTE (69 aa)), are a transit peptide targeting the chloroplast. The tract at residues 16-85 (RRSLPLPNPP…IADEEVEAEN (70 aa)) is disordered. Over residues 61–75 (SISSESSTEASAAAD) the composition is skewed to low complexity.

It is found in the plastid. The protein resides in the chloroplast. In terms of biological role, nuclear genome-encoded factor involved in the biogenesis of photosystem I (PSI). Required for the accumulation of PSI during plant development. Does not seem to be required for the translation of mRNAs of the PSI subunits. The protein is Protein TAB2 homolog, chloroplastic of Zea mays (Maize).